A 210-amino-acid chain; its full sequence is Endonuclease III (210 aa).

One can recognise a HhH domain in the interval 108–127 (FKALIKLPGVGRKTANVVLN). Residues Cys-187, Cys-194, Cys-197, and Cys-203 each coordinate [4Fe-4S] cluster.

Belongs to the Nth/MutY family. [4Fe-4S] cluster is required as a cofactor.

The catalysed reaction is 2'-deoxyribonucleotide-(2'-deoxyribose 5'-phosphate)-2'-deoxyribonucleotide-DNA = a 3'-end 2'-deoxyribonucleotide-(2,3-dehydro-2,3-deoxyribose 5'-phosphate)-DNA + a 5'-end 5'-phospho-2'-deoxyribonucleoside-DNA + H(+). DNA repair enzyme that has both DNA N-glycosylase activity and AP-lyase activity. The DNA N-glycosylase activity releases various damaged pyrimidines from DNA by cleaving the N-glycosidic bond, leaving an AP (apurinic/apyrimidinic) site. The AP-lyase activity cleaves the phosphodiester bond 3' to the AP site by a beta-elimination, leaving a 3'-terminal unsaturated sugar and a product with a terminal 5'-phosphate. This Rickettsia conorii (strain ATCC VR-613 / Malish 7) protein is Endonuclease III.